Here is an 858-residue protein sequence, read N- to C-terminus: Leucine--tRNA ligase (858 aa).

The short motif at 42–52 is the 'HIGH' region element; that stretch reads PYPSGRLHMGH. The short motif at 618–622 is the 'KMSKS' region element; that stretch reads KMSKS. Lysine 621 lines the ATP pocket.

It belongs to the class-I aminoacyl-tRNA synthetase family.

The protein localises to the cytoplasm. It catalyses the reaction tRNA(Leu) + L-leucine + ATP = L-leucyl-tRNA(Leu) + AMP + diphosphate. The polypeptide is Leucine--tRNA ligase (Vibrio cholerae serotype O1 (strain ATCC 39315 / El Tor Inaba N16961)).